Reading from the N-terminus, the 7763-residue chain is Nonribosomal peptide synthetase agiA (7763 aa).

Residues 20–168 are condensation 1; it reads APSVMQEEMI…DGWSARALLE (149 aa). Residues 469 to 866 are adenylation 1; sequence EQAASKWPSK…GRADGQIKLR (398 aa). Residues 995–1071 form the Carrier 1 domain; the sequence is LPESPAERLL…DVARAMSPSS (77 aa). An O-(pantetheine 4'-phosphoryl)serine modification is found at S1032. Residues 1104-1526 are condensation 2; that stretch reads IYPCTPQQEG…GLSDQKLITG (423 aa). Positions 1562–1968 are adenylation 2; sequence FEMQADMTPQ…GRIDSQIKLR (407 aa). Residues 2090-2166 form the Carrier 2 domain; sequence WEQGSIEDKI…SQAKCATSHT (77 aa). Residue S2127 is modified to O-(pantetheine 4'-phosphoryl)serine. The epimerase (E) stretch occupies residues 2212–2556; that stretch reads DHFNQSVLLD…IMPLVFNYQG (345 aa). Positions 2676–3016 are condensation 3; the sequence is DIIPCTPMQR…PALVNTLLNF (341 aa). The tract at residues 3136–3531 is adenylation 3; the sequence is WAAQVPEKVA…GRMDDQIKIR (396 aa). One can recognise a Carrier 3 domain in the interval 3667–3743; the sequence is GPESPTEIML…ELATILNTSY (77 aa). Position 3704 is an O-(pantetheine 4'-phosphoryl)serine (S3704). The condensation 4 stretch occupies residues 3789–4238; the sequence is VMPCTPFQEG…ISQSIDALVQ (450 aa). Residues 4321 to 4687 form an adenylation 4 region; that stretch reads VGSQQPIIPI…GRFDRQIKIR (367 aa). One can recognise a Carrier 4 domain in the interval 4806–4880; the sequence is APTTEREKVI…DLARQLESTA (75 aa). Position 4840 is an O-(pantetheine 4'-phosphoryl)serine (S4840). The segment at 4902–5339 is condensation 5; the sequence is SFAQGRLWFL…ALLNDLSMHD (438 aa). The adenylation 5 stretch occupies residues 5361–5765; that stretch reads FRQEARSHPD…GRRDDQVKIR (405 aa). The interval 5820 to 5975 is S-adenosyl-L-methionine-dependent N-methyltransferase; sequence DAWKNVFDTE…YLSEIVQKLV (156 aa). One can recognise a Carrier 5 domain in the interval 6306 to 6381; sequence EYGSEMERIL…RLADRLLSKQ (76 aa). O-(pantetheine 4'-phosphoryl)serine is present on S6341. The tract at residues 6378–6399 is disordered; that stretch reads LSKQSDSNTEANTSTDGKTQHS. The segment covering 6379 to 6399 has biased composition (polar residues); the sequence is SKQSDSNTEANTSTDGKTQHS. Positions 6424–6883 are condensation 6; sequence MPCTPFQEGV…TVGDAEEAAL (460 aa). The segment at 6913–7327 is adenylation 6; sequence RQAMESPCKI…GRMDSQVKLR (415 aa). Residues 7446 to 7522 enclose the Carrier 6 domain; that stretch reads PSPGTLEATL…SQAFRILCDV (77 aa). S7483 carries the post-translational modification O-(pantetheine 4'-phosphoryl)serine. The tract at residues 7542-7638 is thioesterase (TE); that stretch reads TMVLIHPFFG…TGKGSPFSTV (97 aa).

It belongs to the NRP synthetase family.

Nonribosomal peptide synthetase; part of the gene cluster that mediates the biosynthesis of the aspergillicins A and F, 2 cryptic cyclic hexa-depsipeptides. The hexamodular NRPS agiA catalyzes the condensation of the six amino acid residues including N-Me-L-O-Me-tyrosine, L-proline 1, L-proline 2, D-isoleucine, O-acetyl-threonine, and L-isoleucine. The starting condensation domain (C1) of agiA probably loads acetyl-CoA which is condensed on the N-terminus of threonine by the first module to yield O-acetyl-threonine. The second module then loads L-isoleucine. The epimerase (E) domain on module 2 is probably involved in the formation of the D-isoleucine moiety. Modules 3 and 4 further load 2 successive L-prolines. Module 5 is then involved in the condensation of O-Me-L-tyrosine produced by the O-methyltransferase agiB and the N-methyl transferase (NMeT) domain on module 5 probably catalyzes the N-methylation to yield the N-Me-L-O-Me-tyrosine moiety. The A domain of module 5 loads preferentially O-Me-L-tyrosine, but it can also accept L-phenylalanine, which leads to the production of aspergillicin G. Module 6 then loads the last residue, L-isoleucine. The C-terminal thiolesterase (TE) domain probably cyclizes the peptide using the hydroxy group from threonine to form the cyclic depsipeptide. The sequence is that of Nonribosomal peptide synthetase agiA from Aspergillus flavus (strain ATCC 200026 / FGSC A1120 / IAM 13836 / NRRL 3357 / JCM 12722 / SRRC 167).